A 907-amino-acid polypeptide reads, in one-letter code: NADH-quinone oxidoreductase subunit G (907 aa).

A 2Fe-2S ferredoxin-type domain is found at Met-1–Ile-83. Residues Cys-34, Cys-45, Cys-48, and Cys-67 each contribute to the [2Fe-2S] cluster site. The region spanning Ile-83–Gly-122 is the 4Fe-4S His(Cys)3-ligated-type domain. Residues His-99, Cys-103, Cys-106, Cys-112, Cys-151, Cys-154, Cys-157, Cys-201, Cys-228, Cys-231, Cys-235, and Cys-263 each coordinate [4Fe-4S] cluster. The 4Fe-4S Mo/W bis-MGD-type domain occupies Met-221–Glu-277.

The protein belongs to the complex I 75 kDa subunit family. Composed of 13 different subunits. Subunits NuoCD, E, F, and G constitute the peripheral sector of the complex. The cofactor is [2Fe-2S] cluster. [4Fe-4S] cluster is required as a cofactor.

The catalysed reaction is a quinone + NADH + 5 H(+)(in) = a quinol + NAD(+) + 4 H(+)(out). In terms of biological role, NDH-1 shuttles electrons from NADH, via FMN and iron-sulfur (Fe-S) centers, to quinones in the respiratory chain. Couples the redox reaction to proton translocation (for every two electrons transferred, four hydrogen ions are translocated across the cytoplasmic membrane), and thus conserves the redox energy in a proton gradient. The sequence is that of NADH-quinone oxidoreductase subunit G (nuoG) from Buchnera aphidicola subsp. Baizongia pistaciae (strain Bp).